A 286-amino-acid polypeptide reads, in one-letter code: Pantothenate synthetase (286 aa).

30-37 (MGFLHEGH) is an ATP binding site. Histidine 37 acts as the Proton donor in catalysis. Glutamine 61 provides a ligand contact to (R)-pantoate. Beta-alanine is bound at residue glutamine 61. An ATP-binding site is contributed by 147–150 (GLKD). Glutamine 153 is a (R)-pantoate binding site. ATP-binding positions include valine 176 and 184–187 (KSSR).

It belongs to the pantothenate synthetase family. As to quaternary structure, homodimer.

It localises to the cytoplasm. It catalyses the reaction (R)-pantoate + beta-alanine + ATP = (R)-pantothenate + AMP + diphosphate + H(+). It participates in cofactor biosynthesis; (R)-pantothenate biosynthesis; (R)-pantothenate from (R)-pantoate and beta-alanine: step 1/1. Functionally, catalyzes the condensation of pantoate with beta-alanine in an ATP-dependent reaction via a pantoyl-adenylate intermediate. This is Pantothenate synthetase from Bacillus subtilis (strain 168).